A 478-amino-acid chain; its full sequence is Cytochrome c biogenesis protein CcsB (478 aa).

A run of 3 helical transmembrane segments spans residues 30-50 (LRLA…GTVI), 89-109 (TSWF…CSLT), and 175-195 (FGPI…IWGS). A disordered region spans residues 453 to 478 (LSSPPSPAKEPPPAARVGGTESLANG). Residues 456–466 (PPSPAKEPPPA) show a composition bias toward pro residues.

It belongs to the Ccs1/CcsB family. In terms of assembly, may interact with CcsA.

The protein resides in the cellular thylakoid membrane. Its function is as follows. Required during biogenesis of c-type cytochromes (cytochrome c6 and cytochrome f) at the step of heme attachment. The chain is Cytochrome c biogenesis protein CcsB from Synechococcus sp. (strain JA-3-3Ab) (Cyanobacteria bacterium Yellowstone A-Prime).